The primary structure comprises 273 residues: NADPH-dependent 7-cyano-7-deazaguanine reductase (273 aa).

81–83 (VES) lines the substrate pocket. Position 83 to 84 (83 to 84 (SK)) interacts with NADPH. The active-site Thioimide intermediate is the cysteine 179. Aspartate 186 serves as the catalytic Proton donor. 218-219 (AE) provides a ligand contact to substrate. Residue 247–248 (RG) participates in NADPH binding.

Belongs to the GTP cyclohydrolase I family. QueF type 2 subfamily. As to quaternary structure, homodimer.

Its subcellular location is the cytoplasm. The catalysed reaction is 7-aminomethyl-7-carbaguanine + 2 NADP(+) = 7-cyano-7-deazaguanine + 2 NADPH + 3 H(+). It participates in tRNA modification; tRNA-queuosine biosynthesis. Functionally, catalyzes the NADPH-dependent reduction of 7-cyano-7-deazaguanine (preQ0) to 7-aminomethyl-7-deazaguanine (preQ1). This is NADPH-dependent 7-cyano-7-deazaguanine reductase from Rickettsia canadensis (strain McKiel).